Reading from the N-terminus, the 3092-residue chain is Probable polyketide synthase 45 (3092 aa).

In terms of domain architecture, Ketosynthase family 3 (KS3) spans 10 to 430; the sequence is DNDVAIIGIG…GSNVCLILTE (421 aa). Residues Cys-170, His-315, and His-353 each act as for beta-ketoacyl synthase activity in the active site. The tract at residues 640 to 673 is acyl/malonyl transferase; the sequence is GILASISIGHSLGEVSSAVCSGMIDLETGCFIIY. Ser-650 serves as the catalytic For acyl/malonyl transferase activity. Residues 967-1087 form an N-terminal hotdog fold region; the sequence is INQLGNRNER…GKFSITKHND (121 aa). Residues 967–1254 enclose the PKS/mFAS DH domain; sequence INQLGNRNER…YTQLTPYKNQ (288 aa). His-999 functions as the Proton acceptor; for dehydratase activity in the catalytic mechanism. The interval 1103–1254 is C-terminal hotdog fold; it reads NFVTIQKKEL…YTQLTPYKNQ (152 aa). The active-site Proton donor; for dehydratase activity is the Asp-1165. One can recognise a Carrier domain in the interval 2566–2644; that stretch reads SDDLSIREEI…QLIQSVTDAM (79 aa). Ser-2604 is modified (O-(pantetheine 4'-phosphoryl)serine). Residues 2705–2725 form a helical membrane-spanning segment; sequence NTVFLTGSSGFIGIYILFYLI.

Pantetheine 4'-phosphate serves as cofactor.

It is found in the membrane. In terms of biological role, probable polyketide synthase. This is Probable polyketide synthase 45 (pks45) from Dictyostelium discoideum (Social amoeba).